We begin with the raw amino-acid sequence, 790 residues long: RNA-directed RNA polymerase 2a (790 aa).

The RdRp catalytic domain occupies 524–639; it reads FHFKEIDFSK…GTVEELPRDQ (116 aa). Residues 771-790 form a disordered region; it reads IKPRRVKKSHSDARSRARRA. A compositionally biased stretch (basic and acidic residues) spans 779 to 790; it reads SHSDARSRARRA.

The protein belongs to the bromoviridae 2a family. As to quaternary structure, interacts with replication protein 1a.

It catalyses the reaction RNA(n) + a ribonucleoside 5'-triphosphate = RNA(n+1) + diphosphate. Functionally, RNA-dependent RNA polymerase which replicates the viral genome composed of 3 RNA segments, RNA1, RNA2 and RNA3. This chain is RNA-directed RNA polymerase 2a, found in Alfalfa mosaic virus (AMV).